We begin with the raw amino-acid sequence, 55 residues long: Large ribosomal subunit protein bL33 (55 aa).

Belongs to the bacterial ribosomal protein bL33 family.

The polypeptide is Large ribosomal subunit protein bL33 (Brucella abortus (strain S19)).